The following is a 92-amino-acid chain: Small ribosomal subunit protein uS19 (92 aa).

Belongs to the universal ribosomal protein uS19 family.

In terms of biological role, protein S19 forms a complex with S13 that binds strongly to the 16S ribosomal RNA. This is Small ribosomal subunit protein uS19 from Bifidobacterium adolescentis (strain ATCC 15703 / DSM 20083 / NCTC 11814 / E194a).